Reading from the N-terminus, the 307-residue chain is Probable GTP 3',8-cyclase (307 aa).

A Radical SAM core domain is found at 4–222; it reads ALGREVRSVR…RTFHSREVYR (219 aa). Arg13 contributes to the GTP binding site. Residues Cys20 and Cys24 each contribute to the [4Fe-4S] cluster site. S-adenosyl-L-methionine is bound at residue Tyr26. Cys27 contacts [4Fe-4S] cluster. Lys60 serves as a coordination point for GTP. Residues Gly64 and Ser112 each contribute to the S-adenosyl-L-methionine site. Lys150 provides a ligand contact to GTP. The [4Fe-4S] cluster site is built by Cys240 and Cys243. GTP is bound at residue 245–247; that stretch reads RIR. Cys257 lines the [4Fe-4S] cluster pocket.

This sequence belongs to the radical SAM superfamily. MoaA family. [4Fe-4S] cluster serves as cofactor.

The enzyme catalyses GTP + AH2 + S-adenosyl-L-methionine = (8S)-3',8-cyclo-7,8-dihydroguanosine 5'-triphosphate + 5'-deoxyadenosine + L-methionine + A + H(+). The protein operates within cofactor biosynthesis; molybdopterin biosynthesis. Its function is as follows. Catalyzes the cyclization of GTP to (8S)-3',8-cyclo-7,8-dihydroguanosine 5'-triphosphate. In Methanopyrus kandleri (strain AV19 / DSM 6324 / JCM 9639 / NBRC 100938), this protein is Probable GTP 3',8-cyclase.